The sequence spans 152 residues: Eukaryotic translation initiation factor 2 subunit 3 (152 aa).

N-acetylalanine is present on Ala-1. 51–54 (NKID) contributes to the GTP binding site.

It belongs to the TRAFAC class translation factor GTPase superfamily. Classic translation factor GTPase family. EIF2G subfamily. In terms of assembly, eukaryotic translation initiation factor 2 eIF2 is a heterotrimeric complex composed of an alpha (EIF2S1), a beta (EIF2S2) and a gamma (EIF2S3) chain. eIF2 is member of the 43S pre-initiation complex (43S PIC). Interacts (via C-terminus) with CDC123; the interaction is direct.

The protein localises to the cytoplasm. It is found in the cytosol. Member of the eIF2 complex that functions in the early steps of protein synthesis by forming a ternary complex with GTP and initiator tRNA. This complex binds to a 40S ribosomal subunit, followed by mRNA binding to form the 43S pre-initiation complex (43S PIC). Junction of the 60S ribosomal subunit to form the 80S initiation complex is preceded by hydrolysis of the GTP bound to eIF2 and release of an eIF2-GDP binary complex. In order for eIF2 to recycle and catalyze another round of initiation, the GDP bound to eIF2 must exchange with GTP by way of a reaction catalyzed by eIF-2B. This Oryctolagus cuniculus (Rabbit) protein is Eukaryotic translation initiation factor 2 subunit 3 (EIF2S3).